A 160-amino-acid polypeptide reads, in one-letter code: ATP synthase subunit b (160 aa).

Residues 5–27 traverse the membrane as a helical segment; sequence IEQILTQIIAFLIMLGVLKKFVW.

This sequence belongs to the ATPase B chain family. F-type ATPases have 2 components, F(1) - the catalytic core - and F(0) - the membrane proton channel. F(1) has five subunits: alpha(3), beta(3), gamma(1), delta(1), epsilon(1). F(0) has three main subunits: a(1), b(2) and c(10-14). The alpha and beta chains form an alternating ring which encloses part of the gamma chain. F(1) is attached to F(0) by a central stalk formed by the gamma and epsilon chains, while a peripheral stalk is formed by the delta and b chains.

It localises to the cell inner membrane. Functionally, f(1)F(0) ATP synthase produces ATP from ADP in the presence of a proton or sodium gradient. F-type ATPases consist of two structural domains, F(1) containing the extramembraneous catalytic core and F(0) containing the membrane proton channel, linked together by a central stalk and a peripheral stalk. During catalysis, ATP synthesis in the catalytic domain of F(1) is coupled via a rotary mechanism of the central stalk subunits to proton translocation. In terms of biological role, component of the F(0) channel, it forms part of the peripheral stalk, linking F(1) to F(0). The protein is ATP synthase subunit b of Protochlamydia amoebophila (strain UWE25).